A 270-amino-acid chain; its full sequence is Phospholysine phosphohistidine inorganic pyrophosphate phosphatase (270 aa).

Positions 17 and 19 each coordinate Mg(2+). Substrate contacts are provided by residues 17-19, 54-55, and Lys189; these read DIS and TN. Asp214 contacts Mg(2+).

Belongs to the HAD-like hydrolase superfamily. Homodimer. The cofactor is Mg(2+).

The protein resides in the cytoplasm. Its subcellular location is the nucleus. It catalyses the reaction diphosphate + H2O = 2 phosphate + H(+). Phosphatase that hydrolyzes imidodiphosphate, 3-phosphohistidine and 6-phospholysine. Has broad substrate specificity and can also hydrolyze inorganic diphosphate, but with lower efficiency. This is Phospholysine phosphohistidine inorganic pyrophosphate phosphatase (Lhpp) from Rattus norvegicus (Rat).